Here is a 90-residue protein sequence, read N- to C-terminus: Probable Fe(2+)-trafficking protein (90 aa).

It belongs to the Fe(2+)-trafficking protein family.

Could be a mediator in iron transactions between iron acquisition and iron-requiring processes, such as synthesis and/or repair of Fe-S clusters in biosynthetic enzymes. The sequence is that of Probable Fe(2+)-trafficking protein from Aeromonas salmonicida (strain A449).